Reading from the N-terminus, the 465-residue chain is Siroheme synthase (465 aa).

Residues 1–203 are precorrin-2 dehydrogenase /sirohydrochlorin ferrochelatase; sequence MDFLPLFHSL…GRPAEAERLL (203 aa). NAD(+)-binding positions include 22–23 and 43–44; these read EV and PQ. The residue at position 128 (S128) is a Phosphoserine. The tract at residues 217–465 is uroporphyrinogen-III C-methyltransferase; it reads GEVYLVGAGP…AWFEGAREDA (249 aa). Position 226 (P226) interacts with S-adenosyl-L-methionine. The Proton acceptor role is filled by D249. K271 acts as the Proton donor in catalysis. Residues 302–304, I307, 332–333, M384, and G413 each bind S-adenosyl-L-methionine; these read GGD and TA.

It in the N-terminal section; belongs to the precorrin-2 dehydrogenase / sirohydrochlorin ferrochelatase family. In the C-terminal section; belongs to the precorrin methyltransferase family.

The enzyme catalyses uroporphyrinogen III + 2 S-adenosyl-L-methionine = precorrin-2 + 2 S-adenosyl-L-homocysteine + H(+). It catalyses the reaction precorrin-2 + NAD(+) = sirohydrochlorin + NADH + 2 H(+). It carries out the reaction siroheme + 2 H(+) = sirohydrochlorin + Fe(2+). Its pathway is cofactor biosynthesis; adenosylcobalamin biosynthesis; precorrin-2 from uroporphyrinogen III: step 1/1. It participates in cofactor biosynthesis; adenosylcobalamin biosynthesis; sirohydrochlorin from precorrin-2: step 1/1. The protein operates within porphyrin-containing compound metabolism; siroheme biosynthesis; precorrin-2 from uroporphyrinogen III: step 1/1. It functions in the pathway porphyrin-containing compound metabolism; siroheme biosynthesis; siroheme from sirohydrochlorin: step 1/1. Its pathway is porphyrin-containing compound metabolism; siroheme biosynthesis; sirohydrochlorin from precorrin-2: step 1/1. In terms of biological role, multifunctional enzyme that catalyzes the SAM-dependent methylations of uroporphyrinogen III at position C-2 and C-7 to form precorrin-2 via precorrin-1. Then it catalyzes the NAD-dependent ring dehydrogenation of precorrin-2 to yield sirohydrochlorin. Finally, it catalyzes the ferrochelation of sirohydrochlorin to yield siroheme. This chain is Siroheme synthase, found in Pseudomonas aeruginosa (strain UCBPP-PA14).